The primary structure comprises 200 residues: TATA-box-binding protein (200 aa).

2 tandem repeats follow at residues 25–101 (LQNI…ARII) and 115–192 (IQNI…YPVL).

It belongs to the TBP family. As to quaternary structure, belongs to the TFIID complex together with the TBP-associated factors (TAFs). Binds DNA as monomer.

The protein resides in the nucleus. In terms of biological role, general transcription factor that functions at the core of the DNA-binding multiprotein factor TFIID. Binding of TFIID to the TATA box is the initial transcriptional step of the pre-initiation complex (PIC), playing a role in the activation of eukaryotic genes transcribed by RNA polymerase II. The sequence is that of TATA-box-binding protein from Mesembryanthemum crystallinum (Common ice plant).